Here is a 369-residue protein sequence, read N- to C-terminus: 3,7-dimethylxanthine N-methyltransferase TCS1 (369 aa).

Residue Y24 coordinates S-adenosyl-L-homocysteine. T31 is a binding site for caffeine. C66, N71, D103, L104, S138, and F139 together coordinate S-adenosyl-L-homocysteine. 3 residues coordinate caffeine: Y156, H159, and W160. N177 is a binding site for Mg(2+). R225 contacts caffeine. The Mg(2+) site is built by D263, F265, and N266. F321 provides a ligand contact to caffeine.

The protein belongs to the methyltransferase superfamily. Type-7 methyltransferase family. Mg(2+) serves as cofactor. As to expression, expressed in young leaves and flowers.

It carries out the reaction 7-methylxanthine + S-adenosyl-L-methionine = theobromine + S-adenosyl-L-homocysteine + H(+). It catalyses the reaction theobromine + S-adenosyl-L-methionine = caffeine + S-adenosyl-L-homocysteine + H(+). The catalysed reaction is 1,7-dimethylxanthine + S-adenosyl-L-methionine = caffeine + S-adenosyl-L-homocysteine + H(+). The protein operates within alkaloid biosynthesis. Its function is as follows. Involved in the biosynthesis of caffeine. Catalyzes the conversion of 7-methylxanthine (7mX) to theobromine and of theobromine to caffeine. Has 3-N- and 1-N-methylation activity. This is 3,7-dimethylxanthine N-methyltransferase TCS1 from Camellia sinensis (Tea plant).